A 489-amino-acid polypeptide reads, in one-letter code: Probable transporter MCH1 (489 aa).

The next 12 membrane-spanning stretches (helical) occupy residues 34–54 (ISLI…FTPV), 68–88 (IIGS…GYLA), 94–114 (VLLS…AATV), 124–144 (LAIS…TALL), 156–175 (LTIS…GSRV), 196–216 (FSFL…VVSI), 262–282 (ISTY…EMYI), 302–324 (VAIH…DFLV), 335–355 (LLSI…STFV), 359–379 (YYII…LYPT), 403–423 (IGST…CGVF), and 463–483 (SLII…ILRI).

The protein belongs to the major facilitator superfamily.

Its subcellular location is the vacuole membrane. Its function is as follows. Probable transporter. This Wickerhamomyces anomalus (Yeast) protein is Probable transporter MCH1 (MCH1).